Reading from the N-terminus, the 213-residue chain is MSKFIVIEGLEGAGKSSAVRYVADYLHGHGVARIECTREPGGTPLAERMRAIVKEVHDERLTIEAELLLMYASRVQLVETRIKPALADGIWVVGDRHDLSSQAYQGGGRGIDANLIGAIKRAVLGDFKPDLTLYLDIDPAIGLQRARHRGELDRIELEQLSFFERTRQRYLELAAADESIKVIDAGQAPEQVKAAIEAALAHYLKDEPSCIPG.

An ATP-binding site is contributed by 9-16 (GLEGAGKS).

The protein belongs to the thymidylate kinase family.

It carries out the reaction dTMP + ATP = dTDP + ADP. Functionally, phosphorylation of dTMP to form dTDP in both de novo and salvage pathways of dTTP synthesis. The sequence is that of Thymidylate kinase from Aeromonas hydrophila subsp. hydrophila (strain ATCC 7966 / DSM 30187 / BCRC 13018 / CCUG 14551 / JCM 1027 / KCTC 2358 / NCIMB 9240 / NCTC 8049).